A 748-amino-acid chain; its full sequence is Peroxisomal membrane protein PEX14 (748 aa).

Disordered stretches follow at residues 1–138 (MDND…LSPS) and 190–228 (GNIN…NNNN). Residues 1–277 (MDNDDINNNN…IAQLMMNNNR (277 aa)) lie on the Peroxisomal side of the membrane. The span at 7 to 30 (NNNNNNNNNNNNNNNSQELDQQEQ) shows a compositional bias: low complexity. Residues 8–60 (NNNNNNNNNNNNNNSQELDQQEQTQEEITKQRIQKRKEEAKRIMEERKKREQQ) are a coiled coil. Positions 43–59 (RKEEAKRIMEERKKREQ) are enriched in basic and acidic residues. Residues 86–104 (PQRQQQYDDNDEPPQQQQY) show a composition bias toward polar residues. 3 stretches are compositionally biased toward low complexity: residues 122–131 (TTSSTASAAT), 190–209 (GNIN…NSIS), and 218–228 (NNNNNSSNNNN). A coiled-coil region spans residues 241 to 277 (QQHQQQQQMALTQIQSYQKRLEADDQRIAQLMMNNNR). A helical membrane pass occupies residues 278–300 (FSWNSFLFSVTAIVGAASGLAYL). Residues 301 to 748 (TSNYIIPFLN…INNTDSSVEK (448 aa)) lie on the Cytoplasmic side of the membrane. Positions 316-413 (KDASANMDKK…IGNKENSNNS (98 aa)) form a coiled coil. Disordered regions lie at residues 406 to 673 (NKEN…ETPY) and 685 to 748 (KQGK…SVEK). 2 stretches are compositionally biased toward low complexity: residues 409 to 424 (NSNN…NNNN) and 445 to 476 (STNN…PGSN). Over residues 510–527 (SWQQKSSNPPSDLSNAND) the composition is skewed to polar residues. Composition is skewed to low complexity over residues 528 to 542 (KSSP…PTKP) and 569 to 611 (TTTT…NNNN). Over residues 612–627 (TTIASTSNESNNSKVE) the composition is skewed to polar residues. The segment covering 628–661 (TTSNDSDKSTSPSSSSNNTTSTTATTTTITSAST) has biased composition (low complexity). The span at 710–723 (SAKERPKKPWERDT) shows a compositional bias: basic and acidic residues. Positions 724 to 748 (LTSVTNNLSVEETQTINNTDSSVEK) are enriched in polar residues.

It belongs to the peroxin-14 family. In terms of assembly, interacts with PEX13; forming the PEX13-PEX14 docking complex. Interacts with PEX5 (via WxxxF/Y motifs).

Its subcellular location is the peroxisome membrane. Functionally, component of the PEX13-PEX14 docking complex, a translocon channel that specifically mediates the import of peroxisomal cargo proteins bound to PEX5 receptor. The PEX13-PEX14 docking complex forms a large import pore which can be opened to a diameter of about 9 nm. Mechanistically, PEX5 receptor along with cargo proteins associates with the PEX14 subunit of the PEX13-PEX14 docking complex in the cytosol, leading to the insertion of the receptor into the organelle membrane with the concomitant translocation of the cargo into the peroxisome matrix. In Dictyostelium discoideum (Social amoeba), this protein is Peroxisomal membrane protein PEX14 (pex14).